The following is a 1587-amino-acid chain: Pentafunctional AROM polypeptide (1587 aa).

The interval 1–384 (MIEPTKISIL…YEPRASVVAN (384 aa)) is 3-dehydroquinate synthase. Residues 44 to 46 (DTN), 81 to 84 (EVSK), 114 to 116 (GGV), and Asp119 each bind NAD(+). Position 130 (Arg130) interacts with 7-phospho-2-dehydro-3-deoxy-D-arabino-heptonate. Residue 139-140 (TT) participates in NAD(+) binding. Positions 146 and 152 each coordinate 7-phospho-2-dehydro-3-deoxy-D-arabino-heptonate. Lys161 serves as a coordination point for NAD(+). 7-phospho-2-dehydro-3-deoxy-D-arabino-heptonate is bound at residue Asn162. NAD(+) contacts are provided by residues 179–182 (FLET) and Asn190. Glu194 contacts Zn(2+). Residues 194 to 197 (EVIK) and Lys250 each bind 7-phospho-2-dehydro-3-deoxy-D-arabino-heptonate. The Proton acceptor; for 3-dehydroquinate synthase activity role is filled by Glu260. 7-phospho-2-dehydro-3-deoxy-D-arabino-heptonate contacts are provided by residues 264–268 (RNLLN) and His271. His271 is a Zn(2+) binding site. The active-site Proton acceptor; for 3-dehydroquinate synthase activity is His275. 7-phospho-2-dehydro-3-deoxy-D-arabino-heptonate contacts are provided by His287 and Lys356. His287 serves as a coordination point for Zn(2+). The segment at 397–842 (VFPGVSPKST…WDTLRLKFAV (446 aa)) is EPSP synthase. The For EPSP synthase activity role is filled by Cys824. Positions 864–1055 (SASVFIIGMR…KKKQHSFFVS (192 aa)) are shikimate kinase. An ATP-binding site is contributed by 871–878 (GMRGAGKT). Positions 1056 to 1276 (LTLPDLRPAG…AAPGQLSATE (221 aa)) are 3-dehydroquinase. The active-site Proton acceptor; for 3-dehydroquinate dehydratase activity is His1179. The Schiff-base intermediate with substrate; for 3-dehydroquinate dehydratase activity role is filled by Lys1207. The segment at 1289 to 1587 (KKRFALFGTP…RDAVLGTKAD (299 aa)) is shikimate dehydrogenase.

The protein in the N-terminal section; belongs to the sugar phosphate cyclases superfamily. Dehydroquinate synthase family. It in the 2nd section; belongs to the EPSP synthase family. This sequence in the 3rd section; belongs to the shikimate kinase family. In the 4th section; belongs to the type-I 3-dehydroquinase family. The protein in the C-terminal section; belongs to the shikimate dehydrogenase family. In terms of assembly, homodimer. Zn(2+) serves as cofactor.

Its subcellular location is the cytoplasm. The enzyme catalyses 7-phospho-2-dehydro-3-deoxy-D-arabino-heptonate = 3-dehydroquinate + phosphate. The catalysed reaction is 3-dehydroquinate = 3-dehydroshikimate + H2O. It catalyses the reaction shikimate + NADP(+) = 3-dehydroshikimate + NADPH + H(+). It carries out the reaction shikimate + ATP = 3-phosphoshikimate + ADP + H(+). The enzyme catalyses 3-phosphoshikimate + phosphoenolpyruvate = 5-O-(1-carboxyvinyl)-3-phosphoshikimate + phosphate. It participates in metabolic intermediate biosynthesis; chorismate biosynthesis; chorismate from D-erythrose 4-phosphate and phosphoenolpyruvate: step 2/7. It functions in the pathway metabolic intermediate biosynthesis; chorismate biosynthesis; chorismate from D-erythrose 4-phosphate and phosphoenolpyruvate: step 3/7. The protein operates within metabolic intermediate biosynthesis; chorismate biosynthesis; chorismate from D-erythrose 4-phosphate and phosphoenolpyruvate: step 4/7. Its pathway is metabolic intermediate biosynthesis; chorismate biosynthesis; chorismate from D-erythrose 4-phosphate and phosphoenolpyruvate: step 5/7. It participates in metabolic intermediate biosynthesis; chorismate biosynthesis; chorismate from D-erythrose 4-phosphate and phosphoenolpyruvate: step 6/7. The AROM polypeptide catalyzes 5 consecutive enzymatic reactions in prechorismate polyaromatic amino acid biosynthesis. In Aspergillus clavatus (strain ATCC 1007 / CBS 513.65 / DSM 816 / NCTC 3887 / NRRL 1 / QM 1276 / 107), this protein is Pentafunctional AROM polypeptide.